Reading from the N-terminus, the 67-residue chain is Large ribosomal subunit protein bL31 (67 aa).

Residues cysteine 16, cysteine 18, cysteine 36, and cysteine 39 each contribute to the Zn(2+) site.

This sequence belongs to the bacterial ribosomal protein bL31 family. Type A subfamily. Part of the 50S ribosomal subunit. The cofactor is Zn(2+).

In terms of biological role, binds the 23S rRNA. This Treponema denticola (strain ATCC 35405 / DSM 14222 / CIP 103919 / JCM 8153 / KCTC 15104) protein is Large ribosomal subunit protein bL31.